Here is a 252-residue protein sequence, read N- to C-terminus: Octanoyltransferase (252 aa).

Low complexity predominate over residues 1–21 (MPSAPAAPAAPAAPDAAASVA). Positions 1–22 (MPSAPAAPAAPAAPDAAASVAP) are disordered. In terms of domain architecture, BPL/LPL catalytic spans 56 to 237 (PDTDDEIWVV…RLIAHLDGAT (182 aa)). Substrate-binding positions include 96–103 (RGGQITYH), 168–170 (ALG), and 181–183 (GLS). The Acyl-thioester intermediate role is filled by Cys199.

It belongs to the LipB family.

The protein localises to the cytoplasm. The enzyme catalyses octanoyl-[ACP] + L-lysyl-[protein] = N(6)-octanoyl-L-lysyl-[protein] + holo-[ACP] + H(+). Its pathway is protein modification; protein lipoylation via endogenous pathway; protein N(6)-(lipoyl)lysine from octanoyl-[acyl-carrier-protein]: step 1/2. Its function is as follows. Catalyzes the transfer of endogenously produced octanoic acid from octanoyl-acyl-carrier-protein onto the lipoyl domains of lipoate-dependent enzymes. Lipoyl-ACP can also act as a substrate although octanoyl-ACP is likely to be the physiological substrate. This chain is Octanoyltransferase, found in Burkholderia pseudomallei (strain 668).